The sequence spans 147 residues: uncharacterized protein (147 aa).

Positions 1 to 137 constitute an HTH marR-type domain; sequence MRDNTIGSLI…LYELMTKVHK (137 aa). The segment at residues 53–76 is a DNA-binding region (H-T-H motif); sequence QMELAEKVTVTQGGISRMLTRLEK.

This is an uncharacterized protein from Bacillus cereus (strain ATCC 10987 / NRS 248).